We begin with the raw amino-acid sequence, 466 residues long: SVGFKAGVKDYKLTYYTPDYETKDTDILAAFRMSPQPGVPAEEAGAAVAAESSTGTWTTVWTDGLTSLDRYKGRCYQIEPVAGEENQYIAYVAYPLDLFEEGSVTNMFTSIVGNVFGFKALRALRLEDLRIPPAYVKTFQGPPHGIQVERDKLNKYGRPLLGCTIKPKLGLSAKNYGRAVYECLRGGLDFTKDDENVNSQPFMRWRDRFLFCAEAIYKAQAETGEIKGHYLNATAGTCEEMMKRAVFARELGVPIVMHDYLTGGFTANTSLAHYCRDNGLLLHIHRAMHAVIDRQKNHGIHFRVLAKALRMSGGDHIHSGTVVGKLEGERDITLGFVDLLRDDFIEKDRSRGIFFTQDWVSLPGVLPVASGGIHVWHMPALTEIFGDDSVLQFGGGTLGHPWGNAPGAVANRVALEACVQARNEGRDLASEGNAIIREASKWSPELAAACEVWKEIKFEFPAMDTL.

N6,N6,N6-trimethyllysine is present on K5. The substrate site is built by N114 and T164. K166 serves as the catalytic Proton acceptor. K168 provides a ligand contact to substrate. K192, D194, and E195 together coordinate Mg(2+). K192 bears the N6-carboxylysine mark. The active-site Proton acceptor is H285. R286, H318, and S370 together coordinate substrate.

Belongs to the RuBisCO large chain family. Type I subfamily. As to quaternary structure, heterohexadecamer of 8 large chains and 8 small chains; disulfide-linked. The disulfide link is formed within the large subunit homodimers. Mg(2+) is required as a cofactor. In terms of processing, the disulfide bond which can form in the large chain dimeric partners within the hexadecamer appears to be associated with oxidative stress and protein turnover.

It localises to the plastid. The protein resides in the chloroplast. The catalysed reaction is 2 (2R)-3-phosphoglycerate + 2 H(+) = D-ribulose 1,5-bisphosphate + CO2 + H2O. It carries out the reaction D-ribulose 1,5-bisphosphate + O2 = 2-phosphoglycolate + (2R)-3-phosphoglycerate + 2 H(+). Functionally, ruBisCO catalyzes two reactions: the carboxylation of D-ribulose 1,5-bisphosphate, the primary event in carbon dioxide fixation, as well as the oxidative fragmentation of the pentose substrate in the photorespiration process. Both reactions occur simultaneously and in competition at the same active site. The sequence is that of Ribulose bisphosphate carboxylase large chain from Tropaeolum majus (Common nasturtium).